Here is a 593-residue protein sequence, read N- to C-terminus: MTADNAIFIPPYKADDQDVVVELNNRFGADAFVAQETRTGMPVLWVKRAQLKEVLSFLRGVAKPYSMLYDLHGVDERLRTQRRGLPAADFSVFYHLLSIERNSDVMIKVSLSEGDLNLPTVTGIWPNANWYEREVWDMFGIDFAGHPHLSRIMMPPTWEGHPLRKDYPARATEFDPYSLTLAKQQLEEESARFNPEAWGMKRQGANEDYMFLNLGPNHPSAHGAFRIVLQLDGEEIVDCVPDIGYHHRGAEKMAERQSWHSFIPYTDRIDYLGGVMNNLPYVLAVEKLAGIKVPQKVDVIRIMLAEFFRITSHLLFLGTYIQDVGAMTPVFFTFTDRQRAYTVIEAITGFRLHPAWYRIGGVAHDLPRGWDKLVKDFVEWLPKRLDEYTKAALQNSILKGRTIGVAAYNTKEALEWGTTGAGLRATGCNFDLRKARPYSGYENFEFEVPLAHNGDAYDRCMVRVEEMRQSIRIIDQCLRNMPEGPYKADHPLTTPPPKERTLQHIETLITHFLQVSWGPVMPANESFQMIEATKGINSYYLTSDGGTMSYRTRIRTPSYPHLQQIPSVIKGSMVADLIAYLGSIDFVMADVDR.

Positions 1–184 (MTADNAIFIP…DPYSLTLAKQ (184 aa)) are NADH dehydrogenase I subunit C. Residues 208–593 (DYMFLNLGPN…IDFVMADVDR (386 aa)) are NADH dehydrogenase I subunit D.

The protein in the N-terminal section; belongs to the complex I 30 kDa subunit family. It in the C-terminal section; belongs to the complex I 49 kDa subunit family. NDH-1 is composed of 13 different subunits. Subunits NuoB, CD, E, F, and G constitute the peripheral sector of the complex.

It is found in the cell inner membrane. It catalyses the reaction a quinone + NADH + 5 H(+)(in) = a quinol + NAD(+) + 4 H(+)(out). Functionally, NDH-1 shuttles electrons from NADH, via FMN and iron-sulfur (Fe-S) centers, to quinones in the respiratory chain. The immediate electron acceptor for the enzyme in this species is believed to be ubiquinone. Couples the redox reaction to proton translocation (for every two electrons transferred, four hydrogen ions are translocated across the cytoplasmic membrane), and thus conserves the redox energy in a proton gradient. This is NADH-quinone oxidoreductase subunit C/D from Pseudomonas putida (strain ATCC 47054 / DSM 6125 / CFBP 8728 / NCIMB 11950 / KT2440).